The chain runs to 364 residues: Methylthioribose-1-phosphate isomerase (364 aa).

Substrate is bound by residues 51–53 (RGA), Arg-88, and Gln-199. Asp-240 functions as the Proton donor in the catalytic mechanism. 250–251 (NK) serves as a coordination point for substrate.

This sequence belongs to the eIF-2B alpha/beta/delta subunits family. MtnA subfamily.

The catalysed reaction is 5-(methylsulfanyl)-alpha-D-ribose 1-phosphate = 5-(methylsulfanyl)-D-ribulose 1-phosphate. It functions in the pathway amino-acid biosynthesis; L-methionine biosynthesis via salvage pathway; L-methionine from S-methyl-5-thio-alpha-D-ribose 1-phosphate: step 1/6. In terms of biological role, catalyzes the interconversion of methylthioribose-1-phosphate (MTR-1-P) into methylthioribulose-1-phosphate (MTRu-1-P). The polypeptide is Methylthioribose-1-phosphate isomerase (Cereibacter sphaeroides (strain KD131 / KCTC 12085) (Rhodobacter sphaeroides)).